The sequence spans 506 residues: Apolipoprotein N-acyltransferase (506 aa).

Transmembrane regions (helical) follow at residues 26–46, 66–86, 89–109, 113–133, 166–186, and 192–212; these read FAPY…LILI, FASG…MPLA, LFLM…FTWS, FFAK…WLIA, GVEL…YAVI, and MLLI…WDWV. The region spanning 225-471 is the CN hydrolase domain; sequence IQGNVDQNLK…TAVLRAELTP (247 aa). Glu264 acts as the Proton acceptor in catalysis. The active site involves Lys330. The active-site Nucleophile is the Cys382. A helical membrane pass occupies residues 479-499; it reads HQLGSWPLYIWVALSLALAWW.

It belongs to the CN hydrolase family. Apolipoprotein N-acyltransferase subfamily.

It is found in the cell inner membrane. It carries out the reaction N-terminal S-1,2-diacyl-sn-glyceryl-L-cysteinyl-[lipoprotein] + a glycerophospholipid = N-acyl-S-1,2-diacyl-sn-glyceryl-L-cysteinyl-[lipoprotein] + a 2-acyl-sn-glycero-3-phospholipid + H(+). It functions in the pathway protein modification; lipoprotein biosynthesis (N-acyl transfer). Its function is as follows. Catalyzes the phospholipid dependent N-acylation of the N-terminal cysteine of apolipoprotein, the last step in lipoprotein maturation. In Vibrio vulnificus (strain CMCP6), this protein is Apolipoprotein N-acyltransferase.